The chain runs to 120 residues: UPF0231 protein YacL (120 aa).

This sequence belongs to the UPF0231 family.

In Escherichia fergusonii (strain ATCC 35469 / DSM 13698 / CCUG 18766 / IAM 14443 / JCM 21226 / LMG 7866 / NBRC 102419 / NCTC 12128 / CDC 0568-73), this protein is UPF0231 protein YacL.